A 1024-amino-acid polypeptide reads, in one-letter code: Non-canonical nonribosomal peptide synthetase FrzA (1024 aa).

Positions 29–425 (RAQKSHQAIA…GRRDHQVKVR (397 aa)) are adenylation (A) domain. Positions 534 to 611 (NASQDVRSAL…ALTSIIKQRL (78 aa)) constitute a Carrier domain. S571 carries the O-(pantetheine 4'-phosphoryl)serine modification. A Thioester reductase (TE) domain is found at 655–898 (LTGGTGFVGA…VPVDYVNAAI (244 aa)).

This sequence belongs to the NRP synthetase family. Requires pantetheine 4'-phosphate as cofactor.

The enzyme catalyses L-tyrosinal + AMP + diphosphate + NADP(+) = L-tyrosine + ATP + NADPH + H(+). The protein operates within secondary metabolite biosynthesis. Functionally, non-canonical nonribosomal peptide synthetase; part of the gene cluster that mediates the biosynthesis of the alkaloid (-)-FR901483, a potent immunosuppressant that shows efficacy in animal models and a probable inhibitor of purine nucleotide biosynthesis by targeting phosphoribosylpyrophosphate amidotransferase (PPAT). Within the pathway, FrzA catalyzes the reduction of L-tyrosine via its C-terminal reductase domain to produce L-tyrosinal. The biosynthesis of (-)-FR901483 starts with the condensation of two L-tyrosines to yield (S,S)-dityrosyl-piperazine. This process occurs in 3 steps with the non-canonical nonribosomal peptide synthetase FrzA catalyzing the reduction of L-tyrosine into L-tyrosinal, the spontaneous condensation of 2 L-tyrosinal units, and the subsequent reduction by the NmrA-like family domain-containing oxidoreductase FrzB. The cytochrome P450 monooxygenase FrzC then performs coupling between N10 and C1' to morph the piperazine into a 1,4-diazabicyclo[3.2.1]octane spiro-fused to a 2,5-cyclohexadienone. The dienone portion is further reduced to cyclohexanone by the flavin-dependent reductase FrzD. The methyltranserases (MTs) FrzE and FrzF are then involved in the methylation at the C10' amine and the C4 phenolic oxygen, respectively. The order of the two MTs appear to be interchangeable. Cleavage of the C9-N10' bond by the dioxygenase FrzG then leads to formation of a conjugated iminium. In addition to the oxidation of C9, an additional dehydrogenation between C7 and C8 can occur to give a likely shunt product. The next biosynthetic step is the intramolecular aldol condensation catalyzed by the newly identified aldolase FrzH to yield an aza-tricyclic product with the formation of a C9-C3' bond. The short-chain dehydrogenase/reductase FrzI then produces dephospho-(-)-FR901483 that is phosphorylated at C4'-OH into (-)-FR901483 by the phosphotransferase FrzJ. The polypeptide is Non-canonical nonribosomal peptide synthetase FrzA (Cladobotryum sp).